Reading from the N-terminus, the 323-residue chain is Aquaporin-4 (323 aa).

Residues 1–36 (MSDGAAARRWGKCGPPCSRESIMVAFKGVWTQAFWK) are Cytoplasmic-facing. S-palmitoyl cysteine attachment occurs at residues C13 and C17. Residues 37–57 (AVTAEFLAMLIFVLLSVGSTI) form a helical membrane-spanning segment. Over 58–69 (NWGGSENPLPVD) the chain is Extracellular. The helical transmembrane segment at 70–89 (MVLISLCFGLSIATMVQCFG) threads the bilayer. Residues 90-93 (HISG) lie on the Cytoplasmic side of the membrane. The discontinuously helical intramembrane region spans 94–101 (GHINPAVT). Positions 97 to 99 (NPA) match the NPA 1 motif. The Cytoplasmic segment spans residues 102 to 115 (VAMVCTRKISIAKS). S111 carries the post-translational modification Phosphoserine; by PKG. The helical transmembrane segment at 116 to 136 (VFYITAQCLGAIIGAGILYLV) threads the bilayer. The Extracellular segment spans residues 137–155 (TPPSVVGGLGVTTVHGNLT). A glycan (N-linked (GlcNAc...) asparagine) is linked at N153. The chain crosses the membrane as a helical span at residues 156–176 (AGHGLLVELIITFQLVFTIFA). At 177-184 (SCDSKRTD) the chain is on the cytoplasmic side. Position 180 is a phosphoserine; by PKC (S180). A helical membrane pass occupies residues 185–205 (VTGSVALAIGFSVAIGHLFAI). Topologically, residues 206–208 (NYT) are extracellular. The segment at residues 209–222 (GASMNPARSFGPAV) is an intramembrane region (discontinuously helical). Residues 213–215 (NPA) carry the NPA 2 motif. Over 223–231 (IMGNWENHW) the chain is Extracellular. A helical membrane pass occupies residues 232–252 (IYWVGPIIGAVLAGALYEYVF). Over 253-323 (CPDVELKRRL…DSSGEVLSSV (71 aa)) the chain is Cytoplasmic. Residues S276 and S285 each carry the phosphoserine modification. Phosphothreonine is present on T289. Position 321 is a phosphoserine (S321).

The protein belongs to the MIP/aquaporin (TC 1.A.8) family. In terms of assembly, homotetramer. The tetramers can form oligomeric arrays in membranes. The size of the oligomers differs between tissues and is smaller in skeletal muscle than in brain. Interaction between AQP4 oligomeric arrays in close-by cells can contribute to cell-cell adhesion. Part of a complex containing MLC1, TRPV4, HEPACAM and ATP1B1. Post-translationally, phosphorylation by PKC at Ser-180 promotes internalization from the cell membrane, reducing the conductance by 50%. Phosphorylation by PKG at Ser-111 in response to glutamate increases conductance by 40%. In terms of processing, isoform Long: Palmitoylated on its N-terminal region. Isoform 3: Not palmitoylated. In terms of tissue distribution, detected in cerebellum. Detected on pericapillary astrocyte endfeet in cerebellum, and in skeletal muscle. Detected in glial lamellae in the hypothalamus (at protein level). Abundant in mature brain cortex, cerebellum and spinal cord. Highly expressed in the ependymal cell lining the aqueductal system and over the space of the brain in contact with the subarachnoid space. Detected in paraventricular and supraoptic nuclei, the granule cell layer of the dentate gyrus and the Purkinje cell layer in the cerebellum. Only weakly detectable in eye, kidney, intestine, and lung.

It localises to the cell membrane. The protein localises to the basolateral cell membrane. It is found in the endosome membrane. Its subcellular location is the sarcolemma. The protein resides in the cell projection. It carries out the reaction H2O(in) = H2O(out). Functionally, forms a water-specific channel. Plays an important role in brain water homeostasis and in glymphatic solute transport. Required for a normal rate of water exchange across the blood brain interface. Required for normal levels of cerebrospinal fluid influx into the brain cortex and parenchyma along paravascular spaces that surround penetrating arteries, and for normal drainage of interstitial fluid along paravenous drainage pathways. Thereby, it is required for normal clearance of solutes from the brain interstitial fluid, including soluble beta-amyloid peptides derived from APP. Plays a redundant role in urinary water homeostasis and urinary concentrating ability. This is Aquaporin-4 (Aqp4) from Rattus norvegicus (Rat).